We begin with the raw amino-acid sequence, 218 residues long: Large ribosomal subunit protein uL3 (218 aa).

The protein belongs to the universal ribosomal protein uL3 family. In terms of assembly, part of the 50S ribosomal subunit. Forms a cluster with proteins L14 and L19.

In terms of biological role, one of the primary rRNA binding proteins, it binds directly near the 3'-end of the 23S rRNA, where it nucleates assembly of the 50S subunit. The sequence is that of Large ribosomal subunit protein uL3 from Rhodococcus jostii (strain RHA1).